Reading from the N-terminus, the 62-residue chain is Large ribosomal subunit protein uL30 (62 aa).

Belongs to the universal ribosomal protein uL30 family. Part of the 50S ribosomal subunit.

The chain is Large ribosomal subunit protein uL30 from Ruegeria pomeroyi (strain ATCC 700808 / DSM 15171 / DSS-3) (Silicibacter pomeroyi).